We begin with the raw amino-acid sequence, 186 residues long: Elongation factor P (186 aa).

This sequence belongs to the elongation factor P family.

The protein resides in the cytoplasm. Its pathway is protein biosynthesis; polypeptide chain elongation. Functionally, involved in peptide bond synthesis. Stimulates efficient translation and peptide-bond synthesis on native or reconstituted 70S ribosomes in vitro. Probably functions indirectly by altering the affinity of the ribosome for aminoacyl-tRNA, thus increasing their reactivity as acceptors for peptidyl transferase. This is Elongation factor P from Clostridium acetobutylicum (strain ATCC 824 / DSM 792 / JCM 1419 / IAM 19013 / LMG 5710 / NBRC 13948 / NRRL B-527 / VKM B-1787 / 2291 / W).